Here is a 449-residue protein sequence, read N- to C-terminus: Tripartite motif-containing protein 64B (449 aa).

The RING-type zinc finger occupies 15–56 (CCICVNYFIDPVTIDCGHSFCRPCLCLCSEEGRAPMRCPSCR). The B box-type zinc-finger motif lies at 87–128 (SSDNICVLHEETKELFCEADKRLLCGPCSESPEHMAHSHSPI). Zn(2+) contacts are provided by C92, H95, C114, and H120. Residues 189–225 (LDEEEQRHLQALEREAEELFQQLQDSQVRMTQHLERM) are a coiled coil. In terms of domain architecture, B30.2/SPRY spans 268 to 449 (ELTSWCITGV…LRPFFCFGCT (182 aa)).

It belongs to the TRIM/RBCC family.

The protein is Tripartite motif-containing protein 64B (TRIM64B) of Homo sapiens (Human).